We begin with the raw amino-acid sequence, 352 residues long: Probable transcription factor At1g11510 (352 aa).

Disordered regions lie at residues 1 to 132 (MSRR…GGEE) and 239 to 269 (MKSNEKSKKSSKFESVKHELDSSLPNSKNNC). A compositionally biased stretch (acidic residues) spans 56 to 66 (SGSDEETDSDS). Basic and acidic residues-rich tracts occupy residues 89–101 (KTSEKSGAKRSLE), 117–132 (VSGEEEKKKSGGGGEE), and 241–259 (SNEKSKKSSKFESVKHELD).

It belongs to the GeBP family.

This chain is Probable transcription factor At1g11510, found in Arabidopsis thaliana (Mouse-ear cress).